The chain runs to 336 residues: Inositol 2-dehydrogenase (336 aa).

Belongs to the Gfo/Idh/MocA family. In terms of assembly, homotetramer.

It carries out the reaction myo-inositol + NAD(+) = scyllo-inosose + NADH + H(+). Its function is as follows. Involved in the oxidation of myo-inositol (MI) to 2-keto-myo-inositol (2KMI or 2-inosose). The protein is Inositol 2-dehydrogenase of Pseudomonas fluorescens (strain ATCC BAA-477 / NRRL B-23932 / Pf-5).